We begin with the raw amino-acid sequence, 503 residues long: Probable cytosol aminopeptidase (503 aa).

Mn(2+) is bound by residues Lys-270 and Asp-275. Lys-282 is an active-site residue. Asp-293, Asp-352, and Glu-354 together coordinate Mn(2+). Residue Arg-356 is part of the active site.

It belongs to the peptidase M17 family. Mn(2+) serves as cofactor.

It is found in the cytoplasm. The enzyme catalyses Release of an N-terminal amino acid, Xaa-|-Yaa-, in which Xaa is preferably Leu, but may be other amino acids including Pro although not Arg or Lys, and Yaa may be Pro. Amino acid amides and methyl esters are also readily hydrolyzed, but rates on arylamides are exceedingly low.. It catalyses the reaction Release of an N-terminal amino acid, preferentially leucine, but not glutamic or aspartic acids.. Presumably involved in the processing and regular turnover of intracellular proteins. Catalyzes the removal of unsubstituted N-terminal amino acids from various peptides. In Edwardsiella ictaluri (strain 93-146), this protein is Probable cytosol aminopeptidase.